The following is a 386-amino-acid chain: Magnesium transporter MRS2-7 (386 aa).

2 consecutive transmembrane segments (helical) span residues 321–341 and 355–375; these read LMLS…GIFG and IFKW…VIIL. The short motif at 341–343 is the Required for magnesium transport activity element; it reads GMN.

Belongs to the CorA metal ion transporter (MIT) (TC 1.A.35.5) family. In terms of tissue distribution, isoform 1 is expressed in the whole plant. Isoform 4 is expressed only in roots and flowers.

It is found in the endoplasmic reticulum membrane. Functionally, low-affinity magnesium transporter that mediates the influx of magnesium. The polypeptide is Magnesium transporter MRS2-7 (MRS2-7) (Arabidopsis thaliana (Mouse-ear cress)).